A 153-amino-acid polypeptide reads, in one-letter code: Aspartate carbamoyltransferase regulatory chain (153 aa).

Zn(2+)-binding residues include C109, C114, C138, and C141.

It belongs to the PyrI family. In terms of assembly, contains catalytic and regulatory chains. It depends on Zn(2+) as a cofactor.

Involved in allosteric regulation of aspartate carbamoyltransferase. The polypeptide is Aspartate carbamoyltransferase regulatory chain (Vibrio vulnificus (strain YJ016)).